Here is a 39-residue protein sequence, read N- to C-terminus: Phospholipase A2 (39 aa).

Residue histidine 36 is part of the active site.

Belongs to the phospholipase A2 family. Group III subfamily. Requires Ca(2+) as cofactor. In terms of tissue distribution, expressed by the venom gland.

It is found in the secreted. It catalyses the reaction a 1,2-diacyl-sn-glycero-3-phosphocholine + H2O = a 1-acyl-sn-glycero-3-phosphocholine + a fatty acid + H(+). In terms of biological role, PLA2 catalyzes the calcium-dependent hydrolysis of the 2-acyl groups in 3-sn-phosphoglycerides. This Heloderma horridum horridum (Mexican beaded lizard) protein is Phospholipase A2.